The chain runs to 298 residues: Protein ABIL1 (298 aa).

This sequence belongs to the ABI family. In terms of assembly, binds SCAR2. As to expression, expressed in seedlings, roots, hypocotyls, cotyledons, leaves, stems, and flowers.

Its subcellular location is the cytoplasm. It is found in the cytoskeleton. Its function is as follows. Involved in regulation of actin and microtubule organization. Part of a WAVE complex that activates the Arp2/3 complex. The chain is Protein ABIL1 (ABIL1) from Arabidopsis thaliana (Mouse-ear cress).